An 84-amino-acid chain; its full sequence is Toxin Cll9 (84 aa).

Positions 1 to 19 are cleaved as a signal peptide; that stretch reads MNSLLMITACLILIGTVWA. In terms of domain architecture, LCN-type CS-alpha/beta spans 20–83; the sequence is EDGYLFDKRK…ISRTPGKTCK (64 aa). Intrachain disulfides connect C31–C82, C35–C58, C44–C63, and C48–C65.

In terms of tissue distribution, expressed by the venom gland.

The protein resides in the secreted. Beta toxins bind voltage-independently at site-4 of sodium channels (Nav) and shift the voltage of activation toward more negative potentials thereby affecting sodium channel activation and promoting spontaneous and repetitive firing. Has some action on peripheral ganglia, but not on other sodium channels such as those from cerebellum granular cells in culture. Induces sleep, suggesting a strong antiepileptic action. This Centruroides limpidus (Mexican scorpion) protein is Toxin Cll9.